Here is a 163-residue protein sequence, read N- to C-terminus: NADH-quinone oxidoreductase subunit J (163 aa).

The next 5 membrane-spanning stretches (helical) occupy residues 1–21, 30–50, 54–74, 94–114, and 138–158; these read MEFVFYACSLIAVISTLLVII, LYLIISLLSISGIFFIFGAFF, LEVVIYAGAIIVLFVFVIMML, IGPSFLSLILFLLMTYAIFFV, and LLLVELSSLLLLSALVVVFHI.

This sequence belongs to the complex I subunit 6 family. Composed of 13 different subunits. Subunits NuoA, H, J, K, L, M, N constitute the membrane sector of the complex.

It localises to the cell membrane. It catalyses the reaction a quinone + NADH + 5 H(+)(in) = a quinol + NAD(+) + 4 H(+)(out). Functionally, NDH-1 shuttles electrons from NADH, via FMN and iron-sulfur (Fe-S) centers, to quinones in the respiratory chain. Couples the redox reaction to proton translocation (for every two electrons transferred, four hydrogen ions are translocated across the cytoplasmic membrane), and thus conserves the redox energy in a proton gradient. The polypeptide is NADH-quinone oxidoreductase subunit J (nuoJ) (Buchnera aphidicola subsp. Schizaphis graminum (strain Sg)).